The primary structure comprises 255 residues: MNILIANDDGVFAPGIQALAHALKPLGRVVIVAPESERSGYSSALTLDRPLRPIQISEDVWAVNGTPADCVYLSMNGLFDFEFDLVVSGINSGANLGDDVLYSGTVGAAFEGRLMKQPAIAVSLAGSNVRSYEHAHDYAVAAKWVHDFIQKGLPNLPPRHILNINIPDVAALKGERVTYQGLRAQSKPITSHVDPRGRQVYWIGLAGEAVTDPKKTSSHIQSDFFAVANGYVSITPIQMDATNYDILEDLQTYIG.

A divalent metal cation is bound by residues Asp8, Asp9, Ser39, and Asn91.

It belongs to the SurE nucleotidase family. A divalent metal cation serves as cofactor.

The protein localises to the cytoplasm. The enzyme catalyses a ribonucleoside 5'-phosphate + H2O = a ribonucleoside + phosphate. Nucleotidase that shows phosphatase activity on nucleoside 5'-monophosphates. The polypeptide is 5'-nucleotidase SurE (Acinetobacter baylyi (strain ATCC 33305 / BD413 / ADP1)).